Here is a 413-residue protein sequence, read N- to C-terminus: 3-hydroxy-3-methylglutaryl-coenzyme A reductase (413 aa).

Catalysis depends on charge relay system residues Glu-106 and Asp-312. The active-site Proton donor is the His-408.

It belongs to the HMG-CoA reductase family.

It carries out the reaction (R)-mevalonate + 2 NADP(+) + CoA = (3S)-3-hydroxy-3-methylglutaryl-CoA + 2 NADPH + 2 H(+). It functions in the pathway metabolic intermediate biosynthesis; (R)-mevalonate biosynthesis; (R)-mevalonate from acetyl-CoA: step 3/3. Functionally, converts HMG-CoA to mevalonate. This is 3-hydroxy-3-methylglutaryl-coenzyme A reductase (hmgA) from Pyrococcus horikoshii (strain ATCC 700860 / DSM 12428 / JCM 9974 / NBRC 100139 / OT-3).